The chain runs to 274 residues: Elongation factor Ts (274 aa).

The interval Thr-76–Val-79 is involved in Mg(2+) ion dislocation from EF-Tu.

This sequence belongs to the EF-Ts family.

It is found in the cytoplasm. Associates with the EF-Tu.GDP complex and induces the exchange of GDP to GTP. It remains bound to the aminoacyl-tRNA.EF-Tu.GTP complex up to the GTP hydrolysis stage on the ribosome. The polypeptide is Elongation factor Ts (Mycobacterium sp. (strain JLS)).